Reading from the N-terminus, the 87-residue chain is Small ribosomal subunit protein eS21 (87 aa).

Belongs to the eukaryotic ribosomal protein eS21 family. In terms of assembly, component of the small ribosomal subunit. Mature ribosomes consist of a small (40S) and a large (60S) subunit. The 40S subunit contains about 33 different proteins and 1 molecule of RNA (18S). The 60S subunit contains about 49 different proteins and 3 molecules of RNA (25S, 5.8S and 5S).

It is found in the cytoplasm. In terms of biological role, required for the processing of the 20S rRNA-precursor to mature 18S rRNA in a late step of the maturation of 40S ribosomal subunits. Has a physiological role leading to 18S rRNA stability. The chain is Small ribosomal subunit protein eS21 (RPS21) from Eremothecium gossypii (strain ATCC 10895 / CBS 109.51 / FGSC 9923 / NRRL Y-1056) (Yeast).